A 256-amino-acid polypeptide reads, in one-letter code: Major prion protein (256 aa).

A signal peptide spans 1 to 24 (MVKSHIGSWILVLFVAMWSDVGLC). The tract at residues 25–233 (KKRPKPGGGW…ESQAYYQRGA (209 aa)) is interaction with GRB2, ERI3 and SYN1. The tract at residues 28 to 110 (PKPGGGWNTG…QWNKPSKPKT (83 aa)) is disordered. A run of 5 repeats spans residues 54-62 (PQGAGGWGQ), 63-70 (PHGGGWGQ), 71-78 (PHGGGWGQ), 79-86 (PHGGGWGQ), and 87-95 (PHGGGGWGQ). The 5 X 8 AA tandem repeats of P-H-G-G-G-W-G-Q stretch occupies residues 54 to 95 (PQGAGGWGQPHGGGWGQPHGGGWGQPHGGGWGQPHGGGGWGQ). The segment covering 56-97 (GAGGWGQPHGGGWGQPHGGGWGQPHGGGWGQPHGGGGWGQGG) has biased composition (gly residues). Cu(2+) contacts are provided by H64, G65, G66, H72, G73, G74, H80, G81, G82, H88, G90, and G91. A disulfide bridge connects residues C182 and C217. N-linked (GlcNAc...) asparagine glycosylation is found at N184 and N200. The GPI-anchor amidated alanine moiety is linked to residue A233. The propeptide at 234-256 (SVILFSSPPVILLISFLIFLIVG) is removed in mature form.

This sequence belongs to the prion family. As to quaternary structure, monomer and homodimer. Has a tendency to aggregate into amyloid fibrils containing a cross-beta spine, formed by a steric zipper of superposed beta-strands. Soluble oligomers may represent an intermediate stage on the path to fibril formation. Copper binding may promote oligomerization. Interacts with GRB2, APP, ERI3/PRNPIP and SYN1. Mislocalized cytosolically exposed PrP interacts with MGRN1; this interaction alters MGRN1 subcellular location and causes lysosomal enlargement. Interacts with KIAA1191.

It localises to the cell membrane. The protein resides in the golgi apparatus. Functionally, its primary physiological function is unclear. Has cytoprotective activity against internal or environmental stresses. May play a role in neuronal development and synaptic plasticity. May be required for neuronal myelin sheath maintenance. May play a role in iron uptake and iron homeostasis. Soluble oligomers are toxic to cultured neuroblastoma cells and induce apoptosis (in vitro). Association with GPC1 (via its heparan sulfate chains) targets PRNP to lipid rafts. Also provides Cu(2+) or Zn(2+) for the ascorbate-mediated GPC1 deaminase degradation of its heparan sulfate side chains. This Moschus chrysogaster (Alpine musk deer) protein is Major prion protein (PRNP).